The following is an 86-amino-acid chain: Ferredoxin YfhL (86 aa).

4Fe-4S ferredoxin-type domains follow at residues 1-29 and 31-65; these read MALLITKKCINCDMCEPECPNEAISMGDH and YEINSDKCTECVGHYETPTCQKVCPIPNTIVKDPA. [4Fe-4S] cluster-binding residues include cysteine 9, cysteine 12, cysteine 15, cysteine 19, cysteine 38, cysteine 41, cysteine 50, and cysteine 54.

Requires [4Fe-4S] cluster as cofactor.

Ferredoxins are iron-sulfur proteins that transfer electrons in a wide variety of metabolic reactions. The sequence is that of Ferredoxin YfhL (yfhL) from Escherichia coli (strain K12).